We begin with the raw amino-acid sequence, 251 residues long: WUSCHEL-related homeobox 4 (251 aa).

Disordered stretches follow at residues 1–21 and 33–93; these read MKVH…DSTS and LAPK…RWNP. Residues 11–21 show a composition bias toward low complexity; that stretch reads SSSWDQHDSTS. Residues 71-83 show a composition bias toward basic and acidic residues; that stretch reads KFEHKRDPPHQLE. The homeobox; WUS-type DNA-binding region spans 86–150; that stretch reads PGGTRWNPTQ…NHKARERQKQ (65 aa).

This sequence belongs to the WUS homeobox family. Expressed in the vasculature of the whole plant (roots, hypocotyls, cotyledons and leaves), trichomes and stomata. Expresse in the developing vascular bundles of root and shoot lateral organs.

The protein resides in the nucleus. Its function is as follows. Promotes differentiation and/or maintenance of the vascular procambium, the initial cells of the developing vasculature. Part of the TDIF-TDR-WOX4 signaling pathway that plays a crucial role in the maintenance of the vascular meristem organization during secondary growth. Is required for promoting the proliferation of procambial/cambial stem cells but not for repressing their commitment to xylem differentiation in response to the TDIF signal. Acts redundantly with WOX14 downstream of the TDR/PXY receptor kinase to regulate procambial cell proliferation and differentiation in vascular tissue, independently of any role in vascular. Acts as a cambium regulator in the inflorescence stem. Is required for auxin-dependent cambium stimulation in the inflorescence stem. The sequence is that of WUSCHEL-related homeobox 4 (WOX4) from Arabidopsis thaliana (Mouse-ear cress).